Here is a 309-residue protein sequence, read N- to C-terminus: Taste receptor type 2 member 124 (309 aa).

Residues 1-7 lie on the Extracellular side of the membrane; it reads MVPVLHS. Residues 8–28 traverse the membrane as a helical segment; that stretch reads LSTIILIAEFVWGNLSNGLIV. Over 29 to 46 the chain is Cytoplasmic; that stretch reads LKNCIDWINKKELSTVDQ. Residues 47–67 traverse the membrane as a helical segment; the sequence is ILIVLAISRISLIWETLIIWV. Residues 68–86 are Extracellular-facing; sequence KDQLISSITIEELKIIVFS. Residues 87-107 traverse the membrane as a helical segment; the sequence is FILSSHFSLWLATALSIFYLF. Residues 108–127 lie on the Cytoplasmic side of the membrane; the sequence is RIPNCYWQIFLYLKWRIKQL. A helical membrane pass occupies residues 128–148; the sequence is IVHMLLGSLVFLVANMIQITI. Residues 149 to 183 lie on the Extracellular side of the membrane; sequence TLEERFYQYGGNTSVNSMETEFSILIELMLFNMTM. N-linked (GlcNAc...) asparagine glycosylation is found at Asn160 and Asn180. A helical membrane pass occupies residues 184–204; it reads FSIIPFSLALISFLLLIFSLW. Residues 205-230 lie on the Cytoplasmic side of the membrane; the sequence is KHLQKMPLNSRGDRDPSATAHRNALR. The chain crosses the membrane as a helical span at residues 231 to 251; the sequence is ILVSFLLLYTIYFLSLLISWV. At 252 to 261 the chain is on the extracellular side; that stretch reads AQKNQSELVH. Asn255 is a glycosylation site (N-linked (GlcNAc...) asparagine). A helical transmembrane segment spans residues 262-282; that stretch reads IICMITSLVYPSFHSYILILG. Residues 283 to 309 lie on the Cytoplasmic side of the membrane; that stretch reads NYKLKQTSLWVMRQLGCRMKRQNTPTT.

Belongs to the G-protein coupled receptor T2R family.

The protein resides in the membrane. Functionally, putative taste receptor which may play a role in the perception of bitterness. The protein is Taste receptor type 2 member 124 of Mus musculus (Mouse).